An 89-amino-acid chain; its full sequence is MSLTQEDKAGIISQFGGVQQNTGKAEVQVALFSRRITDLTGHLQQHPKDKHSRRGLLMLVGKRKKVLNYLKNVDIERYRTVIAELDLRK.

This sequence belongs to the universal ribosomal protein uS15 family. In terms of assembly, part of the 30S ribosomal subunit. Forms a bridge to the 50S subunit in the 70S ribosome, contacting the 23S rRNA.

Its function is as follows. One of the primary rRNA binding proteins, it binds directly to 16S rRNA where it helps nucleate assembly of the platform of the 30S subunit by binding and bridging several RNA helices of the 16S rRNA. In terms of biological role, forms an intersubunit bridge (bridge B4) with the 23S rRNA of the 50S subunit in the ribosome. The chain is Small ribosomal subunit protein uS15 from Chlorobium phaeobacteroides (strain DSM 266 / SMG 266 / 2430).